The following is an 801-amino-acid chain: Leucine--tRNA ligase (801 aa).

The 'HIGH' region motif lies at 40–51 (PYPSGAGLHVGH). The 'KMSKS' region motif lies at 576–580 (KMSKS). Lys-579 lines the ATP pocket.

Belongs to the class-I aminoacyl-tRNA synthetase family.

It localises to the cytoplasm. It catalyses the reaction tRNA(Leu) + L-leucine + ATP = L-leucyl-tRNA(Leu) + AMP + diphosphate. The chain is Leucine--tRNA ligase from Exiguobacterium sibiricum (strain DSM 17290 / CCUG 55495 / CIP 109462 / JCM 13490 / 255-15).